Reading from the N-terminus, the 652-residue chain is Vacuolar fusion protein MON1 homolog A (652 aa).

The tract at residues 102 to 141 is disordered; sequence MQRKRSSECLDGTLTPSDGQSMERAESPTPGMAQGMEPGA. Residues serine 128 and serine 153 each carry the phosphoserine modification. Residue threonine 158 is modified to Phosphothreonine. The segment at 158-185 is disordered; that stretch reads TESEDGAASGDSHKEGTRGPPPLPTDMR. Serine 188 carries the phosphoserine modification. A disordered region spans residues 211 to 245; it reads PGSSEDWLEPPGAVGRPATEPPREGTTEGDEEDAT.

Belongs to the MON1/SAND family. In terms of assembly, interacts with CCZ1. Found in a complex with RMC1, CCZ1, MON1A and MON1B. The MON1A-CCZ1B complex interacts with RIMOC1. The MON1A-CCZ1B complex interacts with RAB7A and this interaction is enhanced in the presence of RIMOC1.

Its function is as follows. Plays an important role in membrane trafficking through the secretory apparatus. Not involved in endocytic trafficking to lysosomes. Acts in concert with CCZ1, as a guanine exchange factor (GEF) for RAB7, promotes the exchange of GDP to GTP, converting it from an inactive GDP-bound form into an active GTP-bound form. This chain is Vacuolar fusion protein MON1 homolog A (MON1A), found in Homo sapiens (Human).